Reading from the N-terminus, the 135-residue chain is Cytochrome b5 (135 aa).

Residues 4-80 (SKVYSLAEVS…MDEMCVGDID (77 aa)) enclose the Cytochrome b5 heme-binding domain. Heme-binding residues include H39 and H63. The chain crosses the membrane as a helical span at residues 106 to 126 (FIIKLLQFLVPLIILGVAVGI).

It belongs to the cytochrome b5 family.

It is found in the endoplasmic reticulum membrane. The protein localises to the microsome membrane. Its function is as follows. Membrane bound hemoprotein which function as an electron carrier for several membrane bound oxygenases. The chain is Cytochrome b5 from Cuscuta reflexa (Southern Asian dodder).